Here is a 362-residue protein sequence, read N- to C-terminus: [LysW]-lysine hydrolase (362 aa).

His-69 is a binding site for Zn(2+). Residue Asp-71 is part of the active site. Position 94 (Asp-94) interacts with Zn(2+). Glu-127 (proton acceptor) is an active-site residue. Residues Glu-128, Glu-151, and His-334 each contribute to the Zn(2+) site.

The protein belongs to the peptidase M20A family. LysK subfamily. Zn(2+) serves as cofactor. Co(2+) is required as a cofactor.

The protein localises to the cytoplasm. The catalysed reaction is [amino-group carrier protein]-C-terminal-gamma-(L-lysyl)-L-glutamate + H2O = [amino-group carrier protein]-C-terminal-L-glutamate + L-lysine. It functions in the pathway amino-acid biosynthesis; L-lysine biosynthesis via AAA pathway; L-lysine from L-alpha-aminoadipate (Thermus route): step 5/5. Catalyzes the release of L-lysine from [LysW]-gamma-L-lysine. This Deinococcus radiodurans (strain ATCC 13939 / DSM 20539 / JCM 16871 / CCUG 27074 / LMG 4051 / NBRC 15346 / NCIMB 9279 / VKM B-1422 / R1) protein is [LysW]-lysine hydrolase.